Reading from the N-terminus, the 138-residue chain is Cellular retinoic acid-binding protein 2 (138 aa).

A Nuclear localization signal motif is present at residues 21–31 (KVLGVNVMLRK). K102 participates in a covalent cross-link: Glycyl lysine isopeptide (Lys-Gly) (interchain with G-Cter in SUMO). Position 133 to 135 (133 to 135 (RVY)) interacts with all-trans-retinoate.

This sequence belongs to the calycin superfamily. Fatty-acid binding protein (FABP) family. In terms of assembly, interacts with importin alpha, RXR and RARA. Post-translationally, sumoylated in response to retinoic acid binding, sumoylation is critical for dissociation from ER and subsequent nuclear translocation.

The protein resides in the cytoplasm. Its subcellular location is the endoplasmic reticulum. The protein localises to the nucleus. Transports retinoic acid to the nucleus. Regulates the access of retinoic acid to the nuclear retinoic acid receptors. This chain is Cellular retinoic acid-binding protein 2 (CRABP2), found in Bos taurus (Bovine).